Here is a 322-residue protein sequence, read N- to C-terminus: Protein CCC1 (322 aa).

Residues 1–99 (MSIVALKNAV…LGFFQSVDPR (99 aa)) lie on the Cytoplasmic side of the membrane. Positions 19-86 (GSGGTSELGG…RNGDNGSDNE (68 aa)) are disordered. Positions 26-53 (LGGSESTPLLRGSNSNSSRHDNLSSSSS) are enriched in low complexity. Phosphoserine is present on residues Ser29, Ser53, Ser68, Ser71, and Ser83. Residues 60–70 (NSAQDLENSPM) are compositionally biased toward polar residues. A helical transmembrane segment spans residues 100–120 (VISDLIIGLSDGLTVPFALTA). The Vacuolar portion of the chain corresponds to 121–129 (GLSSLGDAK). Residues 130–150 (LVITGGFAELISGAISMGLGG) traverse the membrane as a helical segment. The Cytoplasmic segment spans residues 151 to 236 (YLGAKSESDY…PAENRELISA (86 aa)). A helical transmembrane segment spans residues 237 to 257 (VTIGGGYLLGGLVPLVPYFFV). Over 258-259 (SD) the chain is Vacuolar. A helical membrane pass occupies residues 260 to 280 (VGTGLIYSIIVMVVTLFWFGY). Residues 281 to 300 (VKTKLSMGSGSSTSKKVTEG) are Cytoplasmic-facing. The chain crosses the membrane as a helical span at residues 301–321 (VEMVVVGGVAAGAAWFFVKLL). Gly322 is a topological domain (vacuolar).

This sequence belongs to the CCC1 family.

The protein resides in the golgi apparatus membrane. The protein localises to the vacuole membrane. It catalyses the reaction Fe(2+)(in) = Fe(2+)(out). Its function is as follows. Has a role in both calcium and manganese homeostasis. Involved in the transfer of iron and Mn(2+) from the cytosol to the vacuole for storage of these metals. The sequence is that of Protein CCC1 (CCC1) from Saccharomyces cerevisiae (strain ATCC 204508 / S288c) (Baker's yeast).